The primary structure comprises 652 residues: Acetyl-coenzyme A synthetase (652 aa).

CoA contacts are provided by residues 193–196 (RRGK) and threonine 312. ATP-binding positions include 388 to 390 (GEP), 412 to 417 (DTWWQT), aspartate 501, and arginine 516. Serine 524 provides a ligand contact to CoA. Mg(2+) is bound by residues valine 538, histidine 540, and valine 543. Lysine 611 carries the N6-acetyllysine modification.

This sequence belongs to the ATP-dependent AMP-binding enzyme family. Requires Mg(2+) as cofactor. Post-translationally, acetylated. Deacetylation by the SIR2-homolog deacetylase activates the enzyme.

It carries out the reaction acetate + ATP + CoA = acetyl-CoA + AMP + diphosphate. In terms of biological role, catalyzes the conversion of acetate into acetyl-CoA (AcCoA), an essential intermediate at the junction of anabolic and catabolic pathways. AcsA undergoes a two-step reaction. In the first half reaction, AcsA combines acetate with ATP to form acetyl-adenylate (AcAMP) intermediate. In the second half reaction, it can then transfer the acetyl group from AcAMP to the sulfhydryl group of CoA, forming the product AcCoA. This chain is Acetyl-coenzyme A synthetase, found in Streptomyces avermitilis (strain ATCC 31267 / DSM 46492 / JCM 5070 / NBRC 14893 / NCIMB 12804 / NRRL 8165 / MA-4680).